A 132-amino-acid polypeptide reads, in one-letter code: Ribosome-binding factor A (132 aa).

The protein belongs to the RbfA family. In terms of assembly, monomer. Binds 30S ribosomal subunits, but not 50S ribosomal subunits or 70S ribosomes.

The protein resides in the cytoplasm. Its function is as follows. One of several proteins that assist in the late maturation steps of the functional core of the 30S ribosomal subunit. Associates with free 30S ribosomal subunits (but not with 30S subunits that are part of 70S ribosomes or polysomes). Required for efficient processing of 16S rRNA. May interact with the 5'-terminal helix region of 16S rRNA. This is Ribosome-binding factor A from Pasteurella multocida (strain Pm70).